A 358-amino-acid polypeptide reads, in one-letter code: Histidinol-phosphate aminotransferase (358 aa).

Lys-210 carries the N6-(pyridoxal phosphate)lysine modification.

This sequence belongs to the class-II pyridoxal-phosphate-dependent aminotransferase family. Histidinol-phosphate aminotransferase subfamily. Homodimer. The cofactor is pyridoxal 5'-phosphate.

The enzyme catalyses L-histidinol phosphate + 2-oxoglutarate = 3-(imidazol-4-yl)-2-oxopropyl phosphate + L-glutamate. The protein operates within amino-acid biosynthesis; L-histidine biosynthesis; L-histidine from 5-phospho-alpha-D-ribose 1-diphosphate: step 7/9. This Clostridium beijerinckii (strain ATCC 51743 / NCIMB 8052) (Clostridium acetobutylicum) protein is Histidinol-phosphate aminotransferase.